Reading from the N-terminus, the 516-residue chain is Anthranilate synthase component 1 (516 aa).

L-tryptophan-binding positions include Ser56 and Pro283–Met285. Gly324–Thr325 serves as a coordination point for chorismate. Residue Glu351 participates in Mg(2+) binding. Chorismate-binding positions include Tyr439, Arg459, Gly473–Gly475, and Gly475. Residue Glu488 coordinates Mg(2+).

It belongs to the anthranilate synthase component I family. Heterotetramer consisting of two non-identical subunits: a beta subunit (TrpG) and a large alpha subunit (TrpE). It depends on Mg(2+) as a cofactor.

It catalyses the reaction chorismate + L-glutamine = anthranilate + pyruvate + L-glutamate + H(+). It participates in amino-acid biosynthesis; L-tryptophan biosynthesis; L-tryptophan from chorismate: step 1/5. Feedback inhibited by tryptophan. Its function is as follows. Part of a heterotetrameric complex that catalyzes the two-step biosynthesis of anthranilate, an intermediate in the biosynthesis of L-tryptophan. In the first step, the glutamine-binding beta subunit (TrpG) of anthranilate synthase (AS) provides the glutamine amidotransferase activity which generates ammonia as a substrate that, along with chorismate, is used in the second step, catalyzed by the large alpha subunit of AS (TrpE) to produce anthranilate. In the absence of TrpG, TrpE can synthesize anthranilate directly from chorismate and high concentrations of ammonia. The sequence is that of Anthranilate synthase component 1 (trpE) from Mycobacterium bovis (strain ATCC BAA-935 / AF2122/97).